We begin with the raw amino-acid sequence, 524 residues long: Tissue-resident T-cell transcription regulator protein ZNF683 (524 aa).

The span at 130–142 (NKDKLGKQPERAG) shows a compositional bias: basic and acidic residues. Disordered regions lie at residues 130–166 (NKDK…NRKS) and 265–303 (QALP…LSSQ). 2 consecutive C2H2-type zinc fingers follow at residues 322–344 (YECN…LRVH) and 350–372 (FQCA…HLVH). A C2H2-type 3; degenerate zinc finger spans residues 398–420 (REREVCHKRFSSSSNLKTHLRLH). A C2H2-type 4 zinc finger spans residues 426–448 (FQCSVCRSRFTQHIHLKLHHRLH).

It belongs to the krueppel C2H2-type zinc-finger protein family. Expressed in terminally differentiated effector CD8(+) T-cells, but not in naive and central memory cells. Expressed in terminally differentiated natural killer (NK) cells and natural killer (NKT) T-cells (at protein level). Expressed strongly in effector-type CD8(+) T-cells and weakly in naive and memory CD8(+) T-cells. Expressed in terminally differentiated natural killer (NK) cells. Isoform 2 is strongly expressed in effector CD8(+) T and natural killer (NK) cells. Isoform 1 is expressed in effector CD8(+) T and natural killer (NK) cells. As to expression, (Microbial infection) Expressed in cytomegalovirus (CMV)-infected effector CD8(+) T-cells (at protein level).

Its subcellular location is the nucleus. In terms of biological role, transcription factor that mediates a transcriptional program in various innate and adaptive immune tissue-resident lymphocyte T-cell types such as tissue-resident memory T (Trm), natural killer (trNK) and natural killer T (NKT) cells and negatively regulates gene expression of proteins that promote the egress of tissue-resident T-cell populations from non-lymphoid organs. Plays a role in the development, retention and long-term establishment of adaptive and innate tissue-resident lymphocyte T cell types in non-lymphoid organs, such as the skin and gut, but also in other nonbarrier tissues like liver and kidney, and therefore may provide immediate immunological protection against reactivating infections or viral reinfection. Also plays a role in the differentiation of both thymic and peripheral NKT cells. Negatively regulates the accumulation of interferon-gamma (IFN-gamma) in NKT cells at steady state or after antigenic stimulation. Positively regulates granzyme B production in NKT cells after innate stimulation. Associates with the transcriptional repressor PRDM1/BLIMP1 to chromatin at gene promoter regions. Its function is as follows. Lacks transcriptional repressor activity. Binds to DNA within promoter regions of the transcriptional repressor PRDM1/BLIMP1 target sites. Unable to regulate interferon-gamma (IFN-gamma) production in cytomegalovirus (CMV)-infected effector CD8(+) T-cells. Functionally, transcriptional repressor that binds to DNA within promoter regions of the transcriptional repressor PRDM1/BLIMP1 target sites. Regulates interferon-gamma (IFN-gamma) production in cytomegalovirus (CMV)-infected effector CD8(+) T cells. This chain is Tissue-resident T-cell transcription regulator protein ZNF683, found in Homo sapiens (Human).